The following is a 769-amino-acid chain: PDZ domain-containing protein 4 (769 aa).

The PDZ domain occupies glutamate 130–proline 214. A disordered region spans residues arginine 221 to phenylalanine 315. Over residues aspartate 229–glutamate 239 the composition is skewed to acidic residues. At serine 236 the chain carries Phosphoserine. Positions arginine 282 to leucine 298 are enriched in basic and acidic residues. Residues valine 389–alanine 419 adopt a coiled-coil conformation. A disordered region spans residues alanine 445–glutamate 579. A compositionally biased stretch (basic and acidic residues) spans glutamate 447 to serine 467. Serine 454 is subject to Phosphoserine. Residues threonine 468–serine 479 show a composition bias toward polar residues. Residues leucine 530 to arginine 547 are compositionally biased toward basic and acidic residues.

In terms of tissue distribution, brain-specific. Expressed in fetal and adult brain. Up-regulated in synovial carcinomas.

The protein resides in the cytoplasm. Its subcellular location is the cell cortex. The protein is PDZ domain-containing protein 4 (PDZD4) of Homo sapiens (Human).